Here is a 165-residue protein sequence, read N- to C-terminus: P2Y purinoceptor 4 (165 aa).

The helical transmembrane segment at 1-16 (SDTLYVLSLPTLVYYY) threads the bilayer. Topologically, residues 17–30 (AARNHWPFGTGFCK) are extracellular. A helical membrane pass occupies residues 31–51 (FVRFLFYWNLYCSVLFLTCIS). The Cytoplasmic segment spans residues 52–74 (VHRYMGICHPLRALRWGRPRFAS). Residues 75–95 (LLCLAVWLVVAGCLVPNLFFV) form a helical membrane-spanning segment. Residues 96–124 (TTSPNGTTILCHDTTRPEEFDHYVHFSSA) are Extracellular-facing. The N-linked (GlcNAc...) asparagine glycan is linked to N100. Residues 125 to 145 (VMVLLFGLPFLVTLVCYGLMA) form a helical membrane-spanning segment. Topologically, residues 146 to 165 (RRLYRPLPGAGQSSSRLRSL) are cytoplasmic.

The protein belongs to the G-protein coupled receptor 1 family.

The protein localises to the cell membrane. In terms of biological role, receptor for UTP and UDP coupled to G-proteins that activate a phosphatidylinositol-calcium second messenger system. This is P2Y purinoceptor 4 (P2RY4) from Cricetulus griseus (Chinese hamster).